The sequence spans 725 residues: Glutamine-dependent NAD(+) synthetase (725 aa).

One can recognise a CN hydrolase domain in the interval 5–275; the sequence is VTVATCALNQ…VEVLTATLDL (271 aa). E45 (proton acceptor; for glutaminase activity) is an active-site residue. The For glutaminase activity role is filled by K114. Catalysis depends on C175, which acts as the Nucleophile; for glutaminase activity. A ligase region spans residues 325–706; it reads YHRPEEEISL…KASQTREEQV (382 aa). An ATP-binding site is contributed by 355 to 362; sequence PLSGGVDS. S357 is a catalytic residue.

It in the C-terminal section; belongs to the NAD synthetase family. Homohexamer. As to expression, highly expressed in small intestine, kidney, liver and testis. Weakly expressed in skeletal muscle, spleen, lung, heart and brain.

The enzyme catalyses deamido-NAD(+) + L-glutamine + ATP + H2O = L-glutamate + AMP + diphosphate + NAD(+) + H(+). It functions in the pathway cofactor biosynthesis; NAD(+) biosynthesis; NAD(+) from deamido-NAD(+) (L-Gln route): step 1/1. Catalyzes the final step of the nicotinamide adenine dinucleotide (NAD) de novo synthesis pathway, the ATP-dependent amidation of deamido-NAD using L-glutamine as a nitrogen source. The sequence is that of Glutamine-dependent NAD(+) synthetase (Nadsyn1) from Mus musculus (Mouse).